We begin with the raw amino-acid sequence, 395 residues long: Chalcone synthase 3 (395 aa).

Position 2 is an N-acetylvaline (V2). C169 is a catalytic residue.

It belongs to the thiolase-like superfamily. Chalcone/stilbene synthases family.

The enzyme catalyses (E)-4-coumaroyl-CoA + 3 malonyl-CoA + 3 H(+) = 2',4,4',6'-tetrahydroxychalcone + 3 CO2 + 4 CoA. It functions in the pathway secondary metabolite biosynthesis; flavonoid biosynthesis. The primary product of this enzyme is 4,2',4',6'-tetrahydroxychalcone (also termed naringenin-chalcone or chalcone) which can under specific conditions spontaneously isomerize into naringenin. The chain is Chalcone synthase 3 (CHS3) from Sinapis alba (White mustard).